The sequence spans 169 residues: Group 2 truncated hemoglobin 3-2 (169 aa).

His99 provides a ligand contact to heme b.

This sequence belongs to the truncated hemoglobin family. Group II subfamily. In terms of assembly, homodimer when ferric.

In terms of biological role, hemoglobin-like protein that exhibits an unusual concentration-independent binding of O(2) and CO. Required for general plant development and during nodulation. May promote shoot organogenesis from root explants. This is Group 2 truncated hemoglobin 3-2 from Medicago truncatula (Barrel medic).